A 540-amino-acid polypeptide reads, in one-letter code: Cytochrome P450 monooxygenase prx8 (540 aa).

The chain crosses the membrane as a helical span at residues 50-68; sequence ALGAAIALFACACAYALVA. Asn-460 is a glycosylation site (N-linked (GlcNAc...) asparagine). Heme is bound at residue Cys-483.

It belongs to the cytochrome P450 family. The cofactor is heme.

The protein resides in the membrane. It participates in sesquiterpene biosynthesis. Functionally, cytochrome P450 monooxygenase; part of the gene cluster that mediates the biosynthesis of PR-toxin, a bicyclic sesquiterpene belonging to the eremophilane class and acting as a mycotoxin. The first step of the pathway is catalyzed by the aristolochene synthase which performs the cyclization of trans,trans-farnesyl diphosphate (FPP) to the bicyclic sesquiterpene aristolochene. Following the formation of aristolochene, the non-oxygenated aristolochene is converted to the trioxygenated intermediate eremofortin B, via 7-epi-neopetasone. This conversion appears to involve three enzymes, a hydroxysterol oxidase-like enzyme, the quinone-oxidase prx3 that forms the quinone-type-structure in the bicyclic nucleus of aristolochene with the C8-oxo group and the C-3 hydroxyl group, and the P450 monooxygenase prx9 that introduces the epoxide at the double bond between carbons 1 and 2. No monoxy or dioxy-intermediates have been reported to be released to the broth, so these three early oxidative reactions may be coupled together. Eremofortin B is further oxidized by another P450 monooxygenase, that introduces a second epoxide between carbons 7 and 11 prior to acetylation to eremofortin A by the acetyltransferase prx11. The second epoxidation may be performed by a second P450 monooxygenase. After the acetylation step, eremofortin A is converted to eremofortin C and then to PR-toxin. First the conversion of eremofortin A to eremofortin C proceeds by oxidation of the side chain of the molecule at C-12 and is catalyzed by the short-chain oxidoreductase prx1. The cytochrome P450 monooxygenase prx8 also plays a role in this step. The primary alcohol formed at C-12 is finally oxidized by the short-chain alcohol dehydrogenase prx4 that forms PR-toxin. In Penicillium rubens (strain ATCC 28089 / DSM 1075 / NRRL 1951 / Wisconsin 54-1255) (Penicillium chrysogenum), this protein is Cytochrome P450 monooxygenase prx8.